The following is a 472-amino-acid chain: MSDSNNIEDNVVINTITNTDTNDTTPPTTDTNTTPSVTLKRRFVGKKKIAAQQQQQNENIDNVTTTKTTTTTTTTTTPITKDIVTTEKKVKVFGRGLAMAAQQIPDEIMNDKELNLAVKILPSNYNFEIFKTIWRIKQASAKRVALQFPEGLLMYSCIISDIIEKFASVETIIMGDVTYGACCVDDYTARSLGADFMVHYGHSCLIPIDVSEIKMLYVFVDIQFDLQHFIETLKFNFKQTQKLIMVSTIQFSASLQSSREPLSEYFSNIFIPQEKPLSPGEILGCTSPKIKFTSPDGDEENNEIVIYLGDGRFHLESIMISNPHVKSYRYDPYSKVFSLEKYDFQEMYKIRRDAIETASKATKFGIILGTLGRQGSPKILDHLEQLLKSNGKHYTTVLLSEIFPAKLDMFSDIESWIQIACPRLSIDWGYAFTTPLLNPYEAEVCLGGINWQSVYPMDFYSKEGGKWTNYSK.

The [4Fe-4S] cluster site is built by Cys182, Cys285, and Cys421.

This sequence belongs to the DPH1/DPH2 family. DPH1 subfamily. As to quaternary structure, component of the 2-(3-amino-3-carboxypropyl)histidine synthase complex composed of dph1, dph2, dph3 and a NADH-dependent reductase. Requires [4Fe-4S] cluster as cofactor.

The catalysed reaction is L-histidyl-[translation elongation factor 2] + S-adenosyl-L-methionine = 2-[(3S)-amino-3-carboxypropyl]-L-histidyl-[translation elongation factor 2] + S-methyl-5'-thioadenosine + H(+). The protein operates within protein modification; peptidyl-diphthamide biosynthesis. In terms of biological role, catalyzes the first step of diphthamide biosynthesis, a post-translational modification of histidine which occurs in elongation factor 2. Dph1 and dph2 transfer a 3-amino-3-carboxypropyl (ACP) group from S-adenosyl-L-methionine (SAM) to a histidine residue, the reaction is assisted by a reduction system comprising dph3 and a NADH-dependent reductase. The sequence is that of 2-(3-amino-3-carboxypropyl)histidine synthase subunit 1 (dph1) from Dictyostelium discoideum (Social amoeba).